A 37-amino-acid polypeptide reads, in one-letter code: Large ribosomal subunit protein bL36 (37 aa).

This sequence belongs to the bacterial ribosomal protein bL36 family.

The polypeptide is Large ribosomal subunit protein bL36 (Treponema denticola (strain ATCC 35405 / DSM 14222 / CIP 103919 / JCM 8153 / KCTC 15104)).